A 118-amino-acid chain; its full sequence is Ribonuclease P protein component (118 aa).

The protein belongs to the RnpA family. As to quaternary structure, consists of a catalytic RNA component (M1 or rnpB) and a protein subunit.

The catalysed reaction is Endonucleolytic cleavage of RNA, removing 5'-extranucleotides from tRNA precursor.. Functionally, RNaseP catalyzes the removal of the 5'-leader sequence from pre-tRNA to produce the mature 5'-terminus. It can also cleave other RNA substrates such as 4.5S RNA. The protein component plays an auxiliary but essential role in vivo by binding to the 5'-leader sequence and broadening the substrate specificity of the ribozyme. This chain is Ribonuclease P protein component, found in Rickettsia rickettsii (strain Iowa).